A 310-amino-acid chain; its full sequence is Taste receptor type 2 member 125 (310 aa).

The Extracellular portion of the chain corresponds to methionine 1–glycine 2. A helical transmembrane segment spans residues isoleucine 3–alanine 23. Topologically, residues asparagine 24–glutamine 46 are cytoplasmic. A helical transmembrane segment spans residues isoleucine 47 to leucine 67. The Extracellular segment spans residues isoleucine 68–asparagine 87. A helical membrane pass occupies residues isoleucine 88–phenylalanine 108. Residues leucine 109–lysine 128 lie on the Cytoplasmic side of the membrane. A helical transmembrane segment spans residues valine 129 to asparagine 149. Topologically, residues methionine 150–threonine 185 are extracellular. Asparagine 162, asparagine 171, and asparagine 183 each carry an N-linked (GlcNAc...) asparagine glycan. A helical membrane pass occupies residues phenylalanine 186–tryptophan 206. Over arginine 207–glutamine 232 the chain is Cytoplasmic. Residues methionine 233–tryptophan 253 form a helical membrane-spanning segment. Over threonine 254–asparagine 261 the chain is Extracellular. Residues asparagine 262–leucine 282 traverse the membrane as a helical segment. Over arginine 283–proline 310 the chain is Cytoplasmic.

It belongs to the G-protein coupled receptor T2R family.

Its subcellular location is the membrane. Functionally, putative taste receptor which may play a role in the perception of bitterness. This chain is Taste receptor type 2 member 125, found in Rattus norvegicus (Rat).